The sequence spans 285 residues: MSVDGVLNVLKPPGMTSHDVVDFIRKIYGIKKVGHTGTLDPDAAGVLPVCMGRATKFTSYLMEHDKRYRFEITFGFSTDTLDKSGKIVESGPVPLFTLEKLQEVLSQFKGEIQQIPPIYSAKKVKGKKLYEYARKGEEVEIPPIKVTVYELELIKYDAPHHLLLDVKCSKGTYVRALVRDICKKLEVPGHMSFLIRTEVGDFDIESSYTLEEIKEGKAEVQPVDKFIKFPSVELDEVSSNKILNGQFIRNTYNVENSLVKLYDNHGIFIGIGVAEGEKIRPKRLF.

Residue Asp40 is the Nucleophile of the active site.

This sequence belongs to the pseudouridine synthase TruB family. Type 1 subfamily.

The enzyme catalyses uridine(55) in tRNA = pseudouridine(55) in tRNA. Its function is as follows. Responsible for synthesis of pseudouridine from uracil-55 in the psi GC loop of transfer RNAs. The sequence is that of tRNA pseudouridine synthase B from Caldanaerobacter subterraneus subsp. tengcongensis (strain DSM 15242 / JCM 11007 / NBRC 100824 / MB4) (Thermoanaerobacter tengcongensis).